A 265-amino-acid polypeptide reads, in one-letter code: HUWE1-associated protein modifying stress responses (265 aa).

Disordered regions lie at residues 1 to 22, 145 to 170, 195 to 218, and 240 to 265; these read MEDK…HWFS, RNSR…GSSV, VRSS…RRNG, and GTRK…NRMI. Polar residues-rich tracts occupy residues 156–170 and 195–212; these read VSPN…GSSV and VRSS…SSNT.

It belongs to the TAPR1 family. In terms of assembly, oligomer.

The protein localises to the nucleus. Its subcellular location is the cytoplasm. Acts as a central player within a network of stress response pathways promoting cellular adaptability. Functions as a negative regulator of TP53/P53 in the cellular response to telomere erosion and probably also DNA damage. This is HUWE1-associated protein modifying stress responses from Xenopus laevis (African clawed frog).